We begin with the raw amino-acid sequence, 91 residues long: Small ribosomal subunit protein bS16 (91 aa).

The protein belongs to the bacterial ribosomal protein bS16 family.

The chain is Small ribosomal subunit protein bS16 from Phytoplasma australiense.